The following is a 116-amino-acid chain: Immunoglobulin heavy variable 3-13 (116 aa).

Positions 1 to 19 (MELGLSWVFLVAILEGVQC) are cleaved as a signal peptide. Residues 20–44 (EVQLVESGGGLVQPGGSLRLSCAAS) form a framework-1 region. Residues 20 to 116 (EVQLVESGGG…GDTAVYYCAR (97 aa)) form the Ig-like domain. An intrachain disulfide couples Cys41 to Cys114. Residues 45 to 52 (GFTFSSYD) form a complementarity-determining-1 region. The tract at residues 53-69 (MHWVRQATGKGLEWVSA) is framework-2. A complementarity-determining-2 region spans residues 70–76 (IGTAGDP). Positions 77 to 114 (YYPGSVKGRFTISRENAKNSLYLQMNSLRAGDTAVYYC) are framework-3. The complementarity-determining-3 stretch occupies residues 115 to 116 (AR).

In terms of assembly, immunoglobulins are composed of two identical heavy chains and two identical light chains; disulfide-linked.

It localises to the secreted. It is found in the cell membrane. In terms of biological role, v region of the variable domain of immunoglobulin heavy chains that participates in the antigen recognition. Immunoglobulins, also known as antibodies, are membrane-bound or secreted glycoproteins produced by B lymphocytes. In the recognition phase of humoral immunity, the membrane-bound immunoglobulins serve as receptors which, upon binding of a specific antigen, trigger the clonal expansion and differentiation of B lymphocytes into immunoglobulins-secreting plasma cells. Secreted immunoglobulins mediate the effector phase of humoral immunity, which results in the elimination of bound antigens. The antigen binding site is formed by the variable domain of one heavy chain, together with that of its associated light chain. Thus, each immunoglobulin has two antigen binding sites with remarkable affinity for a particular antigen. The variable domains are assembled by a process called V-(D)-J rearrangement and can then be subjected to somatic hypermutations which, after exposure to antigen and selection, allow affinity maturation for a particular antigen. This is Immunoglobulin heavy variable 3-13 from Homo sapiens (Human).